Consider the following 33-residue polypeptide: Helofensin-1 (33 aa).

It belongs to the beta-defensin family. Helofensin subfamily. In terms of tissue distribution, expressed by the venom gland.

It is found in the secreted. Its function is as follows. Lethal toxin which possesses an inhibitory effect on direct electrical stimulation of the isolated hemi-diaphragm. Neither hemorrhagic nor hemolytic activities are detected. Phospholipase A2 activity, proteolytic activity and arginine esterolytic activity are absent. This Heloderma horridum horridum (Mexican beaded lizard) protein is Helofensin-1.